A 144-amino-acid polypeptide reads, in one-letter code: Snaclec coagulation factor IX/factor X-binding protein subunit B1 (144 aa).

The signal sequence occupies residues M1–A23. Disulfide bonds link C25–C36, C53–C142, and C119–C134. The C-type lectin domain occupies Y32–E143.

Belongs to the snaclec family. Heterodimer of subunits A and B1; disulfide-linked. Expressed by the venom gland.

It localises to the secreted. Its function is as follows. Anticoagulant protein which binds to the gamma-carboxyglutamic acid-domain regions of factors IX (F9) and factor X (F10) in the presence of calcium with a 1 to 1 stoichiometry. The sequence is that of Snaclec coagulation factor IX/factor X-binding protein subunit B1 from Trimeresurus stejnegeri (Chinese green tree viper).